A 554-amino-acid chain; its full sequence is Suppressor of hairless homolog (554 aa).

The segment at 1 to 31 (MYHPHHLPAHGQVQSHQHREDAAATSSRDVN) is disordered. DNA-binding regions lie at residues 83 to 90 (KSYGNEKR), 218 to 227 (RLRSQTVSTR), and 291 to 323 (RKVDKQTAILDADDPVSQLHKCAFYLKDTERMY). The IPT/TIG domain maps to 381-471 (PNVHSLQLNG…YPTNLTFTFT (91 aa)). The interval 489-554 (GSKRPSASMP…NGANMLRTAS (66 aa)) is disordered. Residues 508-519 (DSGRGNESDRGD) are compositionally biased toward basic and acidic residues.

Belongs to the Su(H) family. As to quaternary structure, interacts with activated Notch proteins.

The protein localises to the nucleus. In terms of biological role, transcriptional regulator that plays a central role in Notch signaling, a signaling pathway involved in cell-cell communication that regulates a broad spectrum of cell-fate determinations. Acts as a transcriptional repressor when it is not associated with Notch proteins. When associated with some Notch protein, it acts as a transcriptional activator that activates transcription of Notch target genes. Required for the transcriptional expression of Brachyury, suggesting that it participates in notochord differentiation. The chain is Suppressor of hairless homolog (Su(H)) from Ciona intestinalis (Transparent sea squirt).